The chain runs to 63 residues: ComG operon repressor (63 aa).

Negatively regulates the transcription of the comG operon. The sequence is that of ComG operon repressor (comZ) from Bacillus subtilis (strain 168).